We begin with the raw amino-acid sequence, 222 residues long: Germin-like protein subfamily 1 member 20 (222 aa).

The N-terminal stretch at 1-22 (MRVSQSLVPFAIIALVLSFVNA) is a signal peptide. Cys-32 and Cys-48 are disulfide-bonded. Positions 62–213 (SGLNVPGNTN…AFQLDASVVK (152 aa)) constitute a Cupin type-1 domain. Asn-77 carries N-linked (GlcNAc...) asparagine glycosylation. 4 residues coordinate Mn(2+): His-110, His-112, Glu-117, and His-159.

It belongs to the germin family. Oligomer (believed to be a pentamer but probably hexamer). Expressed in stems and developing embryos.

The protein resides in the secreted. It localises to the extracellular space. The protein localises to the apoplast. May play a role in plant defense. Probably has no oxalate oxidase activity even if the active site is conserved. The chain is Germin-like protein subfamily 1 member 20 (GLP5A) from Arabidopsis thaliana (Mouse-ear cress).